A 40-amino-acid chain; its full sequence is Neutral phospholipase A2 homolog cannitoxin beta chain 2 (40 aa).

Heterotrimer of alpha, beta, and gamma chains; non-covalently linked. As to expression, expressed by the venom gland.

The protein resides in the secreted. Heterotrimer: Snake venom phospholipase A2 (PLA2) heterotrimer that acts as a potent presynaptic neurotoxin by blocking synaptic transmission and synaptic vesicle recycling. Enzymatic activity is essential for the neurotoxic effects. May act by binding in a calcium-dependent fashion to neurotonal pentraxin-1 (NPTX1) and neurotonal pentraxin-2 (NPTX2), but not to neuronal pentraxin receptor (NPTXR). Also binds to taipoxin-associated calcium binding protein 49 (RCN2), a protein localized in the lumen of endoplasmic reticulum. Functionally, monomer (beta chain): Snake venom phospholipase A2 homolog that is neither toxic nor enzymatically active. Does not bind calcium. The chain is Neutral phospholipase A2 homolog cannitoxin beta chain 2 from Oxyuranus scutellatus canni (Papuan taipan).